A 223-amino-acid chain; its full sequence is Deoxyribose-phosphate aldolase (223 aa).

The active-site Proton donor/acceptor is the Asp91. Lys153 serves as the catalytic Schiff-base intermediate with acetaldehyde. Residue Lys182 is the Proton donor/acceptor of the active site.

This sequence belongs to the DeoC/FbaB aldolase family. DeoC type 1 subfamily.

It is found in the cytoplasm. The catalysed reaction is 2-deoxy-D-ribose 5-phosphate = D-glyceraldehyde 3-phosphate + acetaldehyde. It functions in the pathway carbohydrate degradation; 2-deoxy-D-ribose 1-phosphate degradation; D-glyceraldehyde 3-phosphate and acetaldehyde from 2-deoxy-alpha-D-ribose 1-phosphate: step 2/2. In terms of biological role, catalyzes a reversible aldol reaction between acetaldehyde and D-glyceraldehyde 3-phosphate to generate 2-deoxy-D-ribose 5-phosphate. In Streptococcus agalactiae serotype V (strain ATCC BAA-611 / 2603 V/R), this protein is Deoxyribose-phosphate aldolase.